The sequence spans 40 residues: Photosystem II reaction center protein J (40 aa).

Residues 8–28 traverse the membrane as a helical segment; that stretch reads IPLWLIGTVTGIIVIGLLGIF.

The protein belongs to the PsbJ family. As to quaternary structure, PSII is composed of 1 copy each of membrane proteins PsbA, PsbB, PsbC, PsbD, PsbE, PsbF, PsbH, PsbI, PsbJ, PsbK, PsbL, PsbM, PsbT, PsbX, PsbY, PsbZ, Psb30/Ycf12, at least 3 peripheral proteins of the oxygen-evolving complex and a large number of cofactors. It forms dimeric complexes.

The protein localises to the plastid. It localises to the chloroplast thylakoid membrane. Its function is as follows. One of the components of the core complex of photosystem II (PSII). PSII is a light-driven water:plastoquinone oxidoreductase that uses light energy to abstract electrons from H(2)O, generating O(2) and a proton gradient subsequently used for ATP formation. It consists of a core antenna complex that captures photons, and an electron transfer chain that converts photonic excitation into a charge separation. This is Photosystem II reaction center protein J from Pinus koraiensis (Korean pine).